Consider the following 303-residue polypeptide: MLWFKNLMVYRLSREVALNADEMEKQLSAFAFTPCGSQDMAKTGWVSPMGSHSESLTHAVNGQIVICARKEEKILPSPVIKQELQAKIERLEGEQHRKLKKTEKDALKDEVLHSLLPRAFSRFNQTFMWIDTVNDLIMVDAASAKRAEDTLALLRKSLGSLPVVPLTMESPIELTLTEWVRSGELPAGFIIQDEAELKAILEDGGVIRCKKQNLISDEIAVHIEAGKLVTKLAVDWQERIQLVLADDGSLKRLKFADTLREQNDDIDRDDFAQRFDADFILMTSELAALIKNTIEALGGEAQR.

This sequence belongs to the RdgC family.

The protein localises to the cytoplasm. Its subcellular location is the nucleoid. Its function is as follows. May be involved in recombination. The protein is Recombination-associated protein RdgC of Serratia proteamaculans (strain 568).